A 117-amino-acid polypeptide reads, in one-letter code: Virion membrane protein A21 (117 aa).

Residues 1–21 (MITLFLILCYFILIFNIIVPA) form a helical; Signal-anchor for type III membrane protein membrane-spanning segment. At 22–117 (ISEKMRRERA…RAYSDLFFTT (96 aa)) the chain is on the virion surface side.

The protein belongs to the chordopoxvirinae A21 family. Envelope protein part of a stable entry-fusion complex (EFC) which is at least composed of proteins A16, A21, A28, G3, G9, H2, J5, and L5. Formation of the viral membrane is necessary for the assembly of the complex. Contains two intramolecular disulfide bonds. They are created by the viral disulfide bond formation pathway, a poxvirus-specific pathway that operates on the cytoplasmic side of the MV membranes.

It localises to the virion membrane. Functionally, envelope protein part of the entry-fusion complex responsible for the virus membrane fusion with host cell membrane during virus entry. The polypeptide is Virion membrane protein A21 (Vaccinia virus (strain Ankara) (VACV)).